A 550-amino-acid chain; its full sequence is MESSRILITSALPYANGPLHFGHITGAYLPADVYARFQRLQGKEVLYICGSDEYGIAITLNAELAGMGYQEYVDMYHKLHKDTFKKLGISVDFFSRTTNTYHPAIVQDFYRNLQERGLVENQVTEQLYSEEEGKFLADRYVVGTCPKCGFDRARGDECQQCGADYEARDLKEPRSKLTGAALSLRDTEHAYLHLERMKEDLLAFVQGIYLRPHMRNFVTDYIEHLRPRAVTRDLSWGIPVPDLENKVFYVWFDAPIGYISGTMDWAASIGDPEAWKKFWLDDTVTYAQFIGKDNTSFHAAIFPAMEIGQSLPYKKVDALVTSEFLLLEGFQFSKSDGNFIDMDAFLETYSLDKLRYVLAAIAPETSDSEFSFQEFKTRCNSELVGKYGNFVNRVLAFAVKNGCTELSSPQLEQKDLDFISKSQKLAKDAAEHYAQYSLRKACSTIMELAALGNGYFNDEAPWKLAKEGNWNRVRAILFCACYCQKLLALISYPIMPETALKILEMIAPHSLDLGSQDPDRLQSLWTDSFFDYSEEKFSLKEPELLFTMVE.

The 'HIGH' region motif lies at 13 to 23 (PYANGPLHFGH). 4 residues coordinate Zn(2+): C145, C148, C158, and C161. The short motif at 331–335 (QFSKS) is the 'KMSKS' region element. K334 provides a ligand contact to ATP.

It belongs to the class-I aminoacyl-tRNA synthetase family. MetG type 1 subfamily. Monomer. It depends on Zn(2+) as a cofactor.

The protein localises to the cytoplasm. It carries out the reaction tRNA(Met) + L-methionine + ATP = L-methionyl-tRNA(Met) + AMP + diphosphate. Is required not only for elongation of protein synthesis but also for the initiation of all mRNA translation through initiator tRNA(fMet) aminoacylation. The polypeptide is Methionine--tRNA ligase (metG) (Chlamydia trachomatis serovar D (strain ATCC VR-885 / DSM 19411 / UW-3/Cx)).